Here is a 619-residue protein sequence, read N- to C-terminus: Chaperone protein HscA homolog (619 aa).

The protein belongs to the heat shock protein 70 family.

Functionally, chaperone involved in the maturation of iron-sulfur cluster-containing proteins. Has a low intrinsic ATPase activity which is markedly stimulated by HscB. The sequence is that of Chaperone protein HscA homolog from Shewanella amazonensis (strain ATCC BAA-1098 / SB2B).